The following is a 133-amino-acid chain: Small ribosomal subunit protein uS11 (133 aa).

The protein belongs to the universal ribosomal protein uS11 family. As to quaternary structure, part of the 30S ribosomal subunit. Interacts with proteins S7 and S18. Binds to IF-3.

Its function is as follows. Located on the platform of the 30S subunit, it bridges several disparate RNA helices of the 16S rRNA. Forms part of the Shine-Dalgarno cleft in the 70S ribosome. The protein is Small ribosomal subunit protein uS11 of Brevibacillus brevis (strain 47 / JCM 6285 / NBRC 100599).